Here is a 325-residue protein sequence, read N- to C-terminus: Germination protease (325 aa).

A propeptide spanning residues 1–7 (MYNVRTD) is cleaved from the precursor.

The protein belongs to the peptidase A25 family. As to quaternary structure, homotetramer. In terms of processing, autoproteolytically processed. The inactive tetrameric zymogen termed p46 autoprocesses to a smaller form termed p41, which is active only during spore germination.

The enzyme catalyses Endopeptidase action with P4 Glu or Asp, P1 preferably Glu &gt; Asp, P1' hydrophobic and P2' Ala.. In terms of biological role, initiates the rapid degradation of small, acid-soluble proteins during spore germination. This Clostridium perfringens (strain 13 / Type A) protein is Germination protease.